A 55-amino-acid polypeptide reads, in one-letter code: Large ribosomal subunit protein bL33 (55 aa).

It belongs to the bacterial ribosomal protein bL33 family.

In Enterobacter sp. (strain 638), this protein is Large ribosomal subunit protein bL33.